Here is a 96-residue protein sequence, read N- to C-terminus: Large ribosomal subunit protein eL43 (96 aa).

The segment at 41–62 (CPVCAFPKLKRAGTSIWVCEKC) adopts a C4-type zinc-finger fold.

The protein belongs to the eukaryotic ribosomal protein eL43 family. Requires Zn(2+) as cofactor.

This Methanococcus maripaludis (strain C5 / ATCC BAA-1333) protein is Large ribosomal subunit protein eL43.